The chain runs to 82 residues: Lectin-D2 (82 aa).

Chitin-binding type-1 domains lie at 1–42 (APEC…QCDY) and 43–82 (WRCG…SQCD). Intrachain disulfides connect Cys4–Cys19, Cys13–Cys25, Cys18–Cys32, and Cys36–Cys40. Residues Ser20, Trp22, Tyr24, and Tyr31 each coordinate a carbohydrate. An a carbohydrate-binding site is contributed by Trp43. Intrachain disulfides connect Cys45–Cys60, Cys54–Cys66, Cys59–Cys73, and Cys77–Cys81. Residues Ser61, Tyr63, Trp65, and His72 each coordinate a carbohydrate.

In terms of assembly, monomer.

In terms of biological role, N-acetyl-D-glucosamine binding lectin. Shows no hemagglutinating activity towards rabbit erythrocytes and weak activity towards trypsin-treated erythrocytes. Has mitogenic activity towards human peripheral blood lymphocytes (HPBL). This Phytolacca americana (American pokeweed) protein is Lectin-D2.